We begin with the raw amino-acid sequence, 226 residues long: ATP synthase subunit a (226 aa).

The next 5 helical transmembrane spans lie at 18–38, 74–94, 100–120, 158–180, and 197–217; these read LSLN…SYWL, FISL…PYIF, LTLT…YGWI, LAVR…GNTG, and IALL…FAVL.

The protein belongs to the ATPase A chain family. In terms of assembly, F-type ATPases have 2 components, CF(1) - the catalytic core - and CF(0) - the membrane proton channel. CF(1) has five subunits: alpha(3), beta(3), gamma(1), delta(1), epsilon(1). CF(0) has three main subunits: a, b and c.

The protein localises to the mitochondrion inner membrane. Mitochondrial membrane ATP synthase (F(1)F(0) ATP synthase or Complex V) produces ATP from ADP in the presence of a proton gradient across the membrane which is generated by electron transport complexes of the respiratory chain. F-type ATPases consist of two structural domains, F(1) - containing the extramembraneous catalytic core and F(0) - containing the membrane proton channel, linked together by a central stalk and a peripheral stalk. During catalysis, ATP synthesis in the catalytic domain of F(1) is coupled via a rotary mechanism of the central stalk subunits to proton translocation. Key component of the proton channel; it may play a direct role in the translocation of protons across the membrane. The polypeptide is ATP synthase subunit a (mt:ATPase6) (Anopheles gambiae (African malaria mosquito)).